The following is a 542-amino-acid chain: MPENVAPRTGPPAGAAGAAGGRGKSAYQDRDKPAQIRFSNISAAKAVADAIRTSLGPKGMDKMIQDGKGDVTITNDGATILKQMQVLHPAARMLVELSKAQDIEAGDGTTSVVIIAGSLLDSCTKLLQKGIHPTIISESFQKALEKGIEILTDMSRPEELSDRETLLNSAATSLNSKVVSQYSSLLSPMSVDAVMKVIDPATATSVDLRDIKIVKKLGGTIDDCELVEGLVLTQKVANSGITRVEKAKIGLIQFCLSAPKTDMDNQIVVSDYVQMDRVLREERAYILNLVKQIKKTGCNVLLIQKSILRDALSDLALHFLNKMKIMVVKDIEREDIEFICKTIGTKPVAHVDQFTADMLGSAELAEEVSLNGSGKLIKITGCASPGKTVTIVVRGSNKLVIEEAERSIHDALCVIRCLVKKRALIAGGGAPEIELALRLTEYSRTLSGMESYCIRAFADAMEVIPSTLAENAGLNPISTVTELRNRHAQGEKTTGINVRKGGISNILEEQVVQPLLVSVSALTLATETVRSILKIDDVVNTR.

The span at 1–16 (MPENVAPRTGPPAGAA) shows a compositional bias: low complexity. The disordered stretch occupies residues 1–31 (MPENVAPRTGPPAGAAGAAGGRGKSAYQDRD). Arg-22 bears the Omega-N-methylarginine mark. Lys-24 is modified (N6-acetyllysine). A Phosphoserine modification is found at Ser-39. Gly-56 serves as a coordination point for ADP. Residue Gly-56 participates in ATP binding. Asp-107 serves as a coordination point for Mg(2+). 7 residues coordinate ADP: Gly-108, Thr-109, Thr-110, Ser-111, Asn-175, Ser-176, and Lys-177. Residues Gly-108 and Thr-109 each coordinate ATP. An ATP-binding site is contributed by Lys-177. A phosphoserine mark is found at Ser-187 and Ser-205. Lys-291, Lys-305, Lys-322, and Lys-329 each carry N6-acetyllysine. Gly-428 provides a ligand contact to ADP. At Ser-447 the chain carries Phosphoserine. Gln-513 contacts ADP.

The protein belongs to the TCP-1 chaperonin family. In terms of assembly, component of the chaperonin-containing T-complex (TRiC), a hexadecamer composed of two identical back-to-back stacked rings enclosing a protein folding chamber. Each ring is made up of eight different subunits: TCP1/CCT1, CCT2, CCT3, CCT4, CCT5, CCT6A/CCT6, CCT7, CCT8. Interacts with PACRG. Interacts with DNAAF4. Interacts with DLEC1.

It localises to the cytoplasm. Its subcellular location is the melanosome. It is found in the cytoskeleton. The protein resides in the microtubule organizing center. The protein localises to the centrosome. It localises to the cilium basal body. It catalyses the reaction ATP + H2O = ADP + phosphate + H(+). In terms of biological role, component of the chaperonin-containing T-complex (TRiC), a molecular chaperone complex that assists the folding of actin, tubulin and other proteins upon ATP hydrolysis. The TRiC complex mediates the folding of WRAP53/TCAB1, thereby regulating telomere maintenance. As part of the TRiC complex may play a role in the assembly of BBSome, a complex involved in ciliogenesis regulating transports vesicles to the cilia. This chain is T-complex protein 1 subunit delta (CCT4), found in Bos taurus (Bovine).